Here is a 238-residue protein sequence, read N- to C-terminus: uncharacterized protein (238 aa).

Disordered regions lie at residues F123–G167 and S180–R238. A compositionally biased stretch (low complexity) spans S152 to H161. A compositionally biased stretch (basic residues) spans H207–R238.

This sequence belongs to the PNP/MTAP phosphorylase family.

This is an uncharacterized protein from Rhodospirillum rubrum.